A 215-amino-acid chain; its full sequence is Adenylate kinase (215 aa).

Position 10 to 15 (10 to 15) interacts with ATP; it reads GAGKGT. Residues 30–59 are NMP; it reads STGDIFRKNIKEKTELGQKVEGLLAQGKLV. AMP is bound by residues Thr-31, Arg-36, 57–59, 85–88, and Gln-92; these read KLV and GFPR. Residues 126–163 form an LID region; sequence GRRVCPSCGASYHIDNNPTKVDGICDACQTPVIQREDD. Residue Arg-127 participates in ATP binding. 2 residues coordinate Zn(2+): Cys-130 and Cys-133. An ATP-binding site is contributed by 136–137; it reads SY. 2 residues coordinate Zn(2+): Cys-150 and Cys-153. Residues Arg-160 and Arg-171 each coordinate AMP. Leu-199 is a binding site for ATP.

This sequence belongs to the adenylate kinase family. As to quaternary structure, monomer.

It is found in the cytoplasm. It catalyses the reaction AMP + ATP = 2 ADP. Its pathway is purine metabolism; AMP biosynthesis via salvage pathway; AMP from ADP: step 1/1. Its function is as follows. Catalyzes the reversible transfer of the terminal phosphate group between ATP and AMP. Plays an important role in cellular energy homeostasis and in adenine nucleotide metabolism. The polypeptide is Adenylate kinase (Finegoldia magna (strain ATCC 29328 / DSM 20472 / WAL 2508) (Peptostreptococcus magnus)).